We begin with the raw amino-acid sequence, 315 residues long: tRNA dimethylallyltransferase (315 aa).

Position 13 to 20 (13 to 20) interacts with ATP; that stretch reads GPTASGKT. Substrate is bound at residue 15 to 20; it reads TASGKT. Interaction with substrate tRNA regions lie at residues 38-41, 162-166, and 245-250; these read DSAL, QRIQR, and RCVGYR.

Belongs to the IPP transferase family. In terms of assembly, monomer. Mg(2+) is required as a cofactor.

The enzyme catalyses adenosine(37) in tRNA + dimethylallyl diphosphate = N(6)-dimethylallyladenosine(37) in tRNA + diphosphate. Its function is as follows. Catalyzes the transfer of a dimethylallyl group onto the adenine at position 37 in tRNAs that read codons beginning with uridine, leading to the formation of N6-(dimethylallyl)adenosine (i(6)A). The sequence is that of tRNA dimethylallyltransferase from Methylobacillus flagellatus (strain ATCC 51484 / DSM 6875 / VKM B-1610 / KT).